Reading from the N-terminus, the 267-residue chain is Potassium channel regulatory protein (267 aa).

Residues 5–74 enclose the BTB domain; it reads ELVTLNVGGK…LRTQQLLLPT (70 aa).

Can form homooligomers. Interacts with KCNA1 (via cytoplasmic N-terminal domain) and KCNA4.

It localises to the endoplasmic reticulum. Inhibits potassium fluxes in cells. May regulate Kv1 family channel proteins by retaining a fraction of channels in endomembranes. This chain is Potassium channel regulatory protein (KCNRG), found in Bos taurus (Bovine).